A 638-amino-acid chain; its full sequence is MSALAGEDVWRCPGCGDHIAPSQIWYRTVNETWHGSCFRCSECQDSLTNWYYEKDGKLYCPKDYWGKFGEFCHGCSLLMTGPFMVAGEFKYHPECFACMSCKVIIEDGDAYALVQHATLYCGKCHNEVVLAPMFERLSTESVQEQLPYSVTLISMPATTEGRRGFSVSVESACSNYATTVQVKEVNRMHISPNNRNAIHPGDRILEINGTPVRTLRVEEVEDAISQTSQTLQLLIEHDPVSQRLDQLRLEARLAPHMQNAGHPHALSTLDTKENLEGTLRRRSLRRSNSISKSPGPSSPKEPLLFSRDISRSESLRCSSSYSQQIFRPCDLIHGEVLGKGFFGQAIKVTHKATGKVMVMKELIRCDEETQKTFLTEVKVMRSLDHPNVLKFIGVLYKDKKLNLLTEYIEGGTLKDFLRSMDPFPWQQKVRFAKGIASGMAYLHSMCIIHRDLNSHNCLIKLDKTVVVADFGLSRLIVEERKRAPMEKATTKKRTLRKNDRKKRYTVVGNPYWMAPEMLNGKSYDETVDIFSFGIVLCEIIGQVYADPDCLPRTLDFGLNVKLFWEKFVPTDCPPAFFPLAAICCRLEPESRPAFSKLEDSFEALSLYLGELGIPLPAELEELDHTVSMQYGLTRDSPP.

LIM zinc-binding domains are found at residues 12-63 (CPGC…CPKD) and 72-124 (CHGC…CGKC). Residues 152–239 (LISMPATTEG…TLQLLIEHDP (88 aa)) enclose the PDZ domain. Thr-210 bears the Phosphothreonine mark. Positions 279-304 (LRRRSLRRSNSISKSPGPSSPKEPLL) are disordered. Over residues 286–302 (RSNSISKSPGPSSPKEP) the composition is skewed to low complexity. Phosphoserine is present on residues Ser-293 and Ser-298. Residues 331–608 (LIHGEVLGKG…DSFEALSLYL (278 aa)) enclose the Protein kinase domain. ATP is bound by residues 337-345 (LGKGFFGQA) and Lys-360. The active site involves Asp-451. Phosphothreonine; by ROCK1 and CDC42BP is present on Thr-505.

This sequence belongs to the protein kinase superfamily. TKL Ser/Thr protein kinase family. As to quaternary structure, interacts with LIMK2b. Interacts with LIMK2a. In terms of assembly, binds ROCK1 and MARF1. Interacts with NISCH. In terms of processing, phosphorylated on serine and/or threonine residues by ROCK1.

It is found in the cytoplasm. The protein resides in the cytoskeleton. The protein localises to the spindle. It localises to the microtubule organizing center. Its subcellular location is the centrosome. It is found in the nucleus. The protein resides in the perinuclear region. It catalyses the reaction L-seryl-[protein] + ATP = O-phospho-L-seryl-[protein] + ADP + H(+). It carries out the reaction L-threonyl-[protein] + ATP = O-phospho-L-threonyl-[protein] + ADP + H(+). Serine/threonine-protein kinase that plays an essential role in the regulation of actin filament dynamics. Acts downstream of several Rho family GTPase signal transduction pathways. Involved in astral microtubule organization and mitotic spindle orientation during early stages of mitosis by mediating phosphorylation of TPPP. Displays serine/threonine-specific phosphorylation of myelin basic protein and histone (MBP) in vitro. Suppresses ciliogenesis via multiple pathways; phosphorylation of CFL1, suppression of directional trafficking of ciliary vesicles to the ciliary base, and by facilitating YAP1 nuclear localization where it acts as a transcriptional corepressor of the TEAD4 target genes AURKA and PLK1. This is LIM domain kinase 2 (LIMK2) from Homo sapiens (Human).